Here is a 179-residue protein sequence, read N- to C-terminus: Large ribosomal subunit protein uL5 (179 aa).

Belongs to the universal ribosomal protein uL5 family. Part of the 50S ribosomal subunit; part of the 5S rRNA/L5/L18/L25 subcomplex. Contacts the 5S rRNA and the P site tRNA. Forms a bridge to the 30S subunit in the 70S ribosome.

Functionally, this is one of the proteins that bind and probably mediate the attachment of the 5S RNA into the large ribosomal subunit, where it forms part of the central protuberance. In the 70S ribosome it contacts protein S13 of the 30S subunit (bridge B1b), connecting the 2 subunits; this bridge is implicated in subunit movement. Contacts the P site tRNA; the 5S rRNA and some of its associated proteins might help stabilize positioning of ribosome-bound tRNAs. This chain is Large ribosomal subunit protein uL5, found in Exiguobacterium sibiricum (strain DSM 17290 / CCUG 55495 / CIP 109462 / JCM 13490 / 255-15).